Here is a 193-residue protein sequence, read N- to C-terminus: ATP-dependent Clp protease proteolytic subunit 1 (193 aa).

Ser98 serves as the catalytic Nucleophile. Residue His123 is part of the active site.

It belongs to the peptidase S14 family. Fourteen ClpP subunits assemble into 2 heptameric rings which stack back to back to give a disk-like structure with a central cavity, resembling the structure of eukaryotic proteasomes.

The protein resides in the cytoplasm. It catalyses the reaction Hydrolysis of proteins to small peptides in the presence of ATP and magnesium. alpha-casein is the usual test substrate. In the absence of ATP, only oligopeptides shorter than five residues are hydrolyzed (such as succinyl-Leu-Tyr-|-NHMec, and Leu-Tyr-Leu-|-Tyr-Trp, in which cleavage of the -Tyr-|-Leu- and -Tyr-|-Trp bonds also occurs).. Cleaves peptides in various proteins in a process that requires ATP hydrolysis. Has a chymotrypsin-like activity. Plays a major role in the degradation of misfolded proteins. This Bacillus cereus (strain ATCC 10987 / NRS 248) protein is ATP-dependent Clp protease proteolytic subunit 1.